The chain runs to 452 residues: Tubulin alpha-2/alpha-4 chain (452 aa).

Residue Gln11 coordinates GTP. At Lys40 the chain carries N6-acetyllysine. 7 residues coordinate GTP: Glu71, Ser140, Gly144, Thr145, Thr179, Asn206, and Asn228. A Mg(2+)-binding site is contributed by Glu71. The active site involves Glu254. Positions 432–452 are disordered; the sequence is YEEVGVDSVEGEGEEEGGEEY.

Belongs to the tubulin family. In terms of assembly, dimer of alpha and beta chains. A typical microtubule is a hollow water-filled tube with an outer diameter of 25 nm and an inner diameter of 15 nM. Alpha-beta heterodimers associate head-to-tail to form protofilaments running lengthwise along the microtubule wall with the beta-tubulin subunit facing the microtubule plus end conferring a structural polarity. Microtubules usually have 13 protofilaments but different protofilament numbers can be found in some organisms and specialized cells. Mg(2+) is required as a cofactor. In terms of processing, undergoes a tyrosination/detyrosination cycle, the cyclic removal and re-addition of a C-terminal tyrosine residue by the enzymes tubulin tyrosine carboxypeptidase (TTCP) and tubulin tyrosine ligase (TTL), respectively. Post-translationally, acetylation of alpha chains at Lys-40 stabilizes microtubules and affects affinity and processivity of microtubule motors. This modification has a role in multiple cellular functions, ranging from cell motility, cell cycle progression or cell differentiation to intracellular trafficking and signaling.

The protein resides in the cytoplasm. It localises to the cytoskeleton. It carries out the reaction GTP + H2O = GDP + phosphate + H(+). Functionally, tubulin is the major constituent of microtubules, a cylinder consisting of laterally associated linear protofilaments composed of alpha- and beta-tubulin heterodimers. Microtubules grow by the addition of GTP-tubulin dimers to the microtubule end, where a stabilizing cap forms. Below the cap, tubulin dimers are in GDP-bound state, owing to GTPase activity of alpha-tubulin. The sequence is that of Tubulin alpha-2/alpha-4 chain (TUB2) from Patella vulgata (Common limpet).